Reading from the N-terminus, the 352-residue chain is Guanidino acid hydrolase, mitochondrial (352 aa).

Residues 1 to 35 constitute a mitochondrion transit peptide; that stretch reads MLRLLASGCARGPGPGVGARPAAGLFHPGRRQSRQ. A disordered region spans residues 11-49; that stretch reads RGPGPGVGARPAAGLFHPGRRQSRQASDAPRNQPPSPEF. Positions 162, 185, 187, and 189 each coordinate Mn(2+). Residue Lys-193 is modified to N6-acetyllysine. Lys-217 carries the post-translational modification N6-acetyllysine; alternate. N6-succinyllysine; alternate is present on Lys-217. Asp-276 and Asp-278 together coordinate Mn(2+).

This sequence belongs to the ureohydrolase superfamily. Arginase family. Mn(2+) serves as cofactor. In terms of tissue distribution, highly expressed in liver and kidney. Also found in skeletal muscle, fetal liver, brain, testis, skin and the gastrointestinal tract. Within brain, expression is higher in the cerebral cortex with lower levels in the medulla and spinal cord.

It localises to the mitochondrion. The enzyme catalyses 3-guanidinopropanoate + H2O = urea + beta-alanine. The catalysed reaction is 4-guanidinobutanoate + H2O = urea + 4-aminobutanoate. It carries out the reaction taurocyamine + H2O = urea + taurine. It catalyses the reaction L-arginine + H2O = urea + L-ornithine. It participates in nitrogen metabolism; urea cycle; L-ornithine and urea from L-arginine: step 1/1. Hydrolyzes linear guanidino acids to form urea and the corresponding amines. Displays specificity for substrates having a negatively charged head group and short chains including taurocyamine, guanidino propanoic and butanoic acids. May protect cells by detoxifying potentially harmful amounts of guanidino acids. Metabolizes L-arginine with low efficiency. The polypeptide is Guanidino acid hydrolase, mitochondrial (AGMAT) (Homo sapiens (Human)).